Reading from the N-terminus, the 246-residue chain is 4'-phosphopantetheinyl transferase Svp (246 aa).

The segment covering 223 to 232 (AGTAEESAEG) has biased composition (low complexity). The disordered stretch occupies residues 223–246 (AGTAEESAEGAGKEATADDRTAVP). The span at 233-246 (AGKEATADDRTAVP) shows a compositional bias: basic and acidic residues.

It belongs to the P-Pant transferase superfamily. Gsp/Sfp/HetI/AcpT family.

It catalyses the reaction apo-[ACP] + CoA = holo-[ACP] + adenosine 3',5'-bisphosphate + H(+). In terms of biological role, transfers the 4'-phosphopantetheine moiety from coenzyme A to a Ser of an acyl-carrier-protein. The enzyme is able to transfer the cofactor to a broad range of enzymes with acyl- or peptidyl-carrier protein domains. This Streptomyces mobaraensis (Streptoverticillium mobaraense) protein is 4'-phosphopantetheinyl transferase Svp (svp).